The following is a 122-amino-acid chain: Large ribosomal subunit protein uL14 (122 aa).

This sequence belongs to the universal ribosomal protein uL14 family. In terms of assembly, part of the 50S ribosomal subunit. Forms a cluster with proteins L3 and L19. In the 70S ribosome, L14 and L19 interact and together make contacts with the 16S rRNA in bridges B5 and B8.

In terms of biological role, binds to 23S rRNA. Forms part of two intersubunit bridges in the 70S ribosome. The polypeptide is Large ribosomal subunit protein uL14 (Kosmotoga olearia (strain ATCC BAA-1733 / DSM 21960 / TBF 19.5.1)).